We begin with the raw amino-acid sequence, 365 residues long: Alanine racemase (365 aa).

K32 acts as the Proton acceptor; specific for D-alanine in catalysis. K32 is modified (N6-(pyridoxal phosphate)lysine). Residue R128 coordinates substrate. The active-site Proton acceptor; specific for L-alanine is Y257. Residue M305 participates in substrate binding.

The protein belongs to the alanine racemase family. It depends on pyridoxal 5'-phosphate as a cofactor.

It catalyses the reaction L-alanine = D-alanine. Its pathway is amino-acid biosynthesis; D-alanine biosynthesis; D-alanine from L-alanine: step 1/1. In terms of biological role, catalyzes the interconversion of L-alanine and D-alanine. May also act on other amino acids. This Francisella philomiragia subsp. philomiragia (strain ATCC 25017 / CCUG 19701 / FSC 153 / O#319-036) protein is Alanine racemase (alr).